The sequence spans 420 residues: MALPNPHGPEKKLMPLFLEGEAREAEIARAASLPKVYMTSMETSDILMLGMGAFTPLKGFMNKAEWQGCVFDLKLPDGTMWPMPVTLSISAAELEASGIKEGSDVALIDRESGELYATMNIEEIYQIDKMAQAKEVFKTDDAEGHPGVAKTFAQGEYNLGGPIKALNEGKYHEIYPKYYLYPAQTRALFESKGWSRVVAFQTRNPMHRSHEYLVKFALESGFVDGAMIHAIVGALKAGDIPGETRVKCYEALVDNYFPRENIALAVYPMEMRYGGPREALLHAVFRQNFGCRYLIVGRDHAGVGSYYGPFDAQTIFDELWPGALELGPMKINWTFYCYKCESMASLMTCPHGKEDRVIVSGTQFRRAMQEGAELPKEFGRPEVLAILEEYYRTAEKVEIKKHAYEDLTPEMLAKIKEGKK.

This sequence belongs to the sulfate adenylyltransferase family.

The enzyme catalyses sulfate + ATP + H(+) = adenosine 5'-phosphosulfate + diphosphate. The protein operates within sulfur metabolism; hydrogen sulfide biosynthesis; sulfite from sulfate: step 1/3. In Desulforudis audaxviator (strain MP104C), this protein is Sulfate adenylyltransferase.